Here is a 298-residue protein sequence, read N- to C-terminus: uncharacterized protein (298 aa).

Residue aspartate 119 is part of the active site.

Belongs to the pseudouridine synthase RluA family.

It carries out the reaction a uridine in RNA = a pseudouridine in RNA. This is an uncharacterized protein from Helicobacter pylori (strain ATCC 700392 / 26695) (Campylobacter pylori).